The primary structure comprises 194 residues: Dof zinc finger protein DOF4.2 (194 aa).

The Dof-type zinc-finger motif lies at 21 to 75 (RVCPRCYSDQTRFSYFNNNKKSQPRYKCKNCCRCWTHGGVLRNIPVTGICDKSNL). Positions 23, 26, 48, and 51 each coordinate Zn(2+).

It is found in the nucleus. Functionally, transcription factor that binds specifically to a 5'-AA[AG]G-3' consensus core sequence. This Arabidopsis thaliana (Mouse-ear cress) protein is Dof zinc finger protein DOF4.2 (DOF4.2).